A 1196-amino-acid chain; its full sequence is Probable cation-transporting ATPase 13A4 (1196 aa).

Topologically, residues 1 to 31 (MGHFEKGQHALLNEGEENEMEIFGYRTQGCR) are cytoplasmic. The stretch at 32-52 (KSLCLAGSIFSFGILPLVFYW) is an intramembrane region. Over 53–197 (RPAWHVWAHC…DVEVTPIWKL (145 aa)) the chain is Cytoplasmic. Residues 198–218 (LIKEVLNPFYIFQLFSVCLWF) traverse the membrane as a helical segment. At 219-223 (SEDYK) the chain is on the lumenal side. The helical transmembrane segment at 224–244 (EYAFAIIIMSIISISLTVYDL) threads the bilayer. The Cytoplasmic segment spans residues 245 to 400 (REQSVKLHHL…NFQLYRDAIR (156 aa)). The chain crosses the membrane as a helical span at residues 401–421 (FLLCLVGTATIGMIYTLCVYV). Residues 422-436 (LSGEPPEEVVRKALD) are Lumenal-facing. The chain crosses the membrane as a helical span at residues 437–457 (VITIAVPPALPAALTTGIIYA). At 458–900 (QRRLKKRGIF…KEGRAALVTS (443 aa)) the chain is on the cytoplasmic side. Aspartate 486 acts as the 4-aspartylphosphate intermediate in catalysis. Positions 848 and 852 each coordinate Mg(2+). The chain crosses the membrane as a helical span at residues 901–921 (FCMFKYMALYSMIQYVGVLLL). Residues 922 to 932 (YWETNSLSNYQ) are Lumenal-facing. A helical membrane pass occupies residues 933 to 953 (FLFQDLAITTLIGVTMNLNGA). At 954–972 (YPKLVPFRPAGRLISPPLL) the chain is on the cytoplasmic side. A helical transmembrane segment spans residues 973–993 (LSVIFNILLSLAMHIAGFILV). At 994–1035 (QRQPWYSVEIHSACTVQNESISELTMSPTAPEKMESNSTFTS) the chain is on the lumenal side. Residues 1036 to 1056 (FENTTVWFLGTINCITVALVF) form a helical membrane-spanning segment. Residues 1057–1070 (SKGKPFRQPTYTNY) are Cytoplasmic-facing. A helical membrane pass occupies residues 1071–1091 (IFVLVLIIQLGVCLFILFADI). The Lumenal portion of the chain corresponds to 1092-1109 (PELYRRLDLLCTPVLWRA). Residues 1110-1130 (SIVIMLSLNFIVSLVAEEAVI) traverse the membrane as a helical segment. Over 1131 to 1196 (ENRALWMMIK…PVFESNEEQL (66 aa)) the chain is Cytoplasmic.

Belongs to the cation transport ATPase (P-type) (TC 3.A.3) family. Type V subfamily. In terms of tissue distribution, expressed in heart, placenta, liver, skeletal muscles, and pancreas. Lower levels of expression are also detected in brain, lung and kidney. Weakly expressed in the adult brain. Expression in fetal brain is higher than in adult brain, with levels similar to several other fetal tissues including spleen and skeletal muscle. In adult brain expressed at low levels in all tissues examined, including the temporal lobe and putamen. Highly expressed in the respiratory and integumentary systems.

The protein resides in the early endosome membrane. Its subcellular location is the late endosome membrane. It is found in the recycling endosome membrane. It catalyses the reaction ATP + H2O = ADP + phosphate + H(+). The protein is Probable cation-transporting ATPase 13A4 (ATP13A4) of Homo sapiens (Human).